The following is a 265-amino-acid chain: Translation initiation factor 2 subunit alpha (265 aa).

Residues 12 to 82 (GELVIGTVKK…KMRVVEVSLK (71 aa)) enclose the S1 motif domain.

Belongs to the eIF-2-alpha family. As to quaternary structure, heterotrimer composed of an alpha, a beta and a gamma chain.

EIF-2 functions in the early steps of protein synthesis by forming a ternary complex with GTP and initiator tRNA. This chain is Translation initiation factor 2 subunit alpha, found in Pyrobaculum aerophilum (strain ATCC 51768 / DSM 7523 / JCM 9630 / CIP 104966 / NBRC 100827 / IM2).